The following is a 178-amino-acid chain: Ribosome maturation factor RimM (178 aa).

The PRC barrel domain maps to 100–178 (TDGEYYWYQL…EMKVEWDADF (79 aa)).

The protein belongs to the RimM family. As to quaternary structure, binds ribosomal protein uS19.

The protein localises to the cytoplasm. Its function is as follows. An accessory protein needed during the final step in the assembly of 30S ribosomal subunit, possibly for assembly of the head region. Essential for efficient processing of 16S rRNA. May be needed both before and after RbfA during the maturation of 16S rRNA. It has affinity for free ribosomal 30S subunits but not for 70S ribosomes. The polypeptide is Ribosome maturation factor RimM (Pseudomonas fluorescens (strain SBW25)).